The following is a 305-amino-acid chain: Tyrosine recombinase XerC (305 aa).

One can recognise a Core-binding (CB) domain in the interval 2–88; it reads TNKQRLVHLF…ALRSFYKFLL (87 aa). Positions 109–295 constitute a Tyr recombinase domain; sequence RIPSFLYEEE…SKDSLRKTYM (187 aa). Active-site residues include Arg149, Lys173, His247, Arg250, and His273. The active-site O-(3'-phospho-DNA)-tyrosine intermediate is the Tyr282.

The protein belongs to the 'phage' integrase family. XerC subfamily. In terms of assembly, forms a cyclic heterotetrameric complex composed of two molecules of XerC and two molecules of XerD.

It localises to the cytoplasm. Functionally, site-specific tyrosine recombinase, which acts by catalyzing the cutting and rejoining of the recombining DNA molecules. The XerC-XerD complex is essential to convert dimers of the bacterial chromosome into monomers to permit their segregation at cell division. It also contributes to the segregational stability of plasmids. The sequence is that of Tyrosine recombinase XerC from Bacillus pumilus (strain SAFR-032).